The sequence spans 243 residues: NAD-dependent protein deacetylase (243 aa).

In terms of domain architecture, Deacetylase sirtuin-type spans 1-243 (MKHDLETLKH…VSVVKSLMTE (243 aa)). Ala24, Phe35, Arg36, Gln105, Ile107, Asp108, and His123 together coordinate NAD(+). Nicotinamide is bound at residue Phe35. 2 residues coordinate nicotinamide: Ile107 and Asp108. His123 functions as the Proton acceptor in the catalytic mechanism. Zn(2+) is bound by residues Cys131, Cys134, Cys151, and Cys154. The NAD(+) site is built by Ser192, Ser193, Asn215, and Asp232.

Belongs to the sirtuin family. Class U subfamily. Requires Zn(2+) as cofactor.

It localises to the cytoplasm. The enzyme catalyses N(6)-acetyl-L-lysyl-[protein] + NAD(+) + H2O = 2''-O-acetyl-ADP-D-ribose + nicotinamide + L-lysyl-[protein]. Functionally, NAD-dependent protein deacetylase which modulates the activities of several enzymes which are inactive in their acetylated form. This chain is NAD-dependent protein deacetylase, found in Staphylococcus aureus (strain MRSA252).